Consider the following 307-residue polypeptide: Potassium channel subfamily K member 7 (307 aa).

Residues 1-10 (MGSLKPWARY) are Cytoplasmic-facing. Residues 11 to 31 (LLLLMAHLLAMGLGAVVLQAL) traverse the membrane as a helical segment. N-linked (GlcNAc...) asparagine glycosylation occurs at N83. Positions 92-118 (LPSALLFTASILTTTGYGHMAPLSSGG) form an intramembrane region, pore-forming. A helical transmembrane segment spans residues 120–140 (AFCVVYAALGLPASLALVAAL). Residues 141 to 172 (RHCLLPVFSRPGDWVAIRWQLAPAQAALLQAA) lie on the Cytoplasmic side of the membrane. The helical transmembrane segment at 173–193 (GLGLLVACVFMLLPALVLWGV) threads the bilayer. An intramembrane region (pore-forming) is located at residues 199–227 (LLEAIYFCFGSLSTIGLGDLLPAHGRGLH). Residues 233 to 253 (LGQFALLGYLLLGLLAMLLAV) form a helical membrane-spanning segment. Residues 254 to 307 (ETFSELPQVRAMVKFFGPSGSRTDEDQDGILGQDELALSTVLPDAPVLGPTTPA) lie on the Cytoplasmic side of the membrane.

Belongs to the two pore domain potassium channel (TC 1.A.1.8) family. As to quaternary structure, homodimer. Detected in embryo, eye, lung and liver. Weakly expressed in colon, testis, atria, kidney, intestine, bladder, uterus, ovary, salivary gland, thymus and brain stem. Not detected in brain, cerebellum, spinal cord, heart, ventricle, skeletal muscle, liver, placenta and pancreas. In the eye, highly expressed in the retinal ganglion cell layer and inner nuclear layer.

It is found in the membrane. Its function is as follows. Probable potassium channel subunit. No channel activity observed in vitro as protein remains in the endoplasmic reticulum. May need to associate with an as yet unknown partner in order to reach the plasma membrane. The protein is Potassium channel subfamily K member 7 (Kcnk7) of Mus musculus (Mouse).